Consider the following 156-residue polypeptide: MKLQLVAVGTKMPDWVQTGFTDYLRRFPKDMPFELLEIPAGKRGKNADIKRILEREGEQMLAAVGKGNRIVTLDIPGTRWETPQLAQQLERWKQDGRDVSLLIGGPEGLAPECKAAAEQSWSLSPLTLPHPLVRVLVAESLYRAWSITTNHPYHRE.

Residues Leu-73, Gly-104, and 123 to 128 each bind S-adenosyl-L-methionine; that span reads LSPLTL.

Belongs to the RNA methyltransferase RlmH family. In terms of assembly, homodimer.

It localises to the cytoplasm. It carries out the reaction pseudouridine(1915) in 23S rRNA + S-adenosyl-L-methionine = N(3)-methylpseudouridine(1915) in 23S rRNA + S-adenosyl-L-homocysteine + H(+). In terms of biological role, specifically methylates the pseudouridine at position 1915 (m3Psi1915) in 23S rRNA. In Pectobacterium carotovorum subsp. carotovorum (strain PC1), this protein is Ribosomal RNA large subunit methyltransferase H.